We begin with the raw amino-acid sequence, 424 residues long: Histidine--tRNA ligase (424 aa).

The protein belongs to the class-II aminoacyl-tRNA synthetase family. In terms of assembly, homodimer.

The protein localises to the cytoplasm. The catalysed reaction is tRNA(His) + L-histidine + ATP = L-histidyl-tRNA(His) + AMP + diphosphate + H(+). The polypeptide is Histidine--tRNA ligase (Bacillus velezensis (strain DSM 23117 / BGSC 10A6 / LMG 26770 / FZB42) (Bacillus amyloliquefaciens subsp. plantarum)).